A 248-amino-acid polypeptide reads, in one-letter code: Large ribosomal subunit protein uL4 (248 aa).

2 disordered regions span residues 72–103 and 173–210; these read RSEN…KSLN and GRSV…RNLS. Positions 92–103 are enriched in basic and acidic residues; it reads PKAEKDQTKSLN. Basic residues predominate over residues 177–189; it reads RAGRGKTRGRKYS.

This sequence belongs to the universal ribosomal protein uL4 family. Part of the 50S ribosomal subunit.

Functionally, one of the primary rRNA binding proteins, this protein initially binds near the 5'-end of the 23S rRNA. It is important during the early stages of 50S assembly. It makes multiple contacts with different domains of the 23S rRNA in the assembled 50S subunit and ribosome. In terms of biological role, forms part of the polypeptide exit tunnel. The polypeptide is Large ribosomal subunit protein uL4 (Halorubrum lacusprofundi (strain ATCC 49239 / DSM 5036 / JCM 8891 / ACAM 34)).